The chain runs to 354 residues: Rhodopsin (354 aa).

Topologically, residues 1–36 (MNGTEGPNFYIPMSNKTGVVRSPFEYPQYYLAEPWK) are extracellular. 2 N-linked (GlcNAc...) asparagine glycosylation sites follow: Asn-2 and Asn-15. A helical transmembrane segment spans residues 37–61 (YSILAAYMFLLILLGFPINFMTLYV). Residues 62–73 (TIQHKKLRTPLN) lie on the Cytoplasmic side of the membrane. The helical transmembrane segment at 74–96 (YILLNLAFANHFMVLCGFTITLY) threads the bilayer. The Extracellular segment spans residues 97-110 (TSLHGYFVFGQSGC). Cysteines 110 and 187 form a disulfide. The helical transmembrane segment at 111–133 (YFEGFFATLGGEIALWSLVALAI) threads the bilayer. The short motif at 134-136 (ERY) is the 'Ionic lock' involved in activated form stabilization element. The Cytoplasmic segment spans residues 134 to 152 (ERYIVVCKPMSNFRFGENH). The chain crosses the membrane as a helical span at residues 153 to 173 (AMMGVAFTWIMALACAVPPLF). At 174-202 (GWSRYIPEGMQCSCGVDYYTLKPEINNES) the chain is on the extracellular side. Residues 203 to 224 (FVIYMFVVHFLIPLIIITFCYG) form a helical membrane-spanning segment. Residues 225–252 (RLVCTVKEAAAQQQESATTQKAEKEVTR) are Cytoplasmic-facing. The helical transmembrane segment at 253 to 274 (MVIIMVIFFLICWVPYAYVAFY) threads the bilayer. At 275-286 (IFCNQGSEFGPI) the chain is on the extracellular side. A helical transmembrane segment spans residues 287–308 (FMTVPAFFAKSSAIYNPVIYIM). The residue at position 296 (Lys-296) is an N6-(retinylidene)lysine. The Cytoplasmic segment spans residues 309-354 (LNKQFRNCMITTLCCGKNPFGDDDASSAATSKTEATSVSTSQVSPA). S-palmitoyl cysteine attachment occurs at residues Cys-322 and Cys-323. A disordered region spans residues 332–354 (DASSAATSKTEATSVSTSQVSPA). Residues 334-354 (SSAATSKTEATSVSTSQVSPA) are compositionally biased toward low complexity.

Belongs to the G-protein coupled receptor 1 family. Opsin subfamily. Post-translationally, contains one covalently linked retinal chromophore. Upon light absorption, the covalently bound 11-cis-retinal is converted to all-trans-retinal. After hydrolysis of the Schiff base and release of the covalently bound all-trans-retinal, active rhodopsin is regenerated by binding of a fresh molecule of 11-cis-retinal.

The protein localises to the membrane. It is found in the cell projection. Its subcellular location is the cilium. It localises to the photoreceptor outer segment. Photoreceptor required for image-forming vision at low light intensity. Required for photoreceptor cell viability after birth. Light-induced isomerization of 11-cis to all-trans retinal triggers a conformational change that activates signaling via G-proteins. Subsequent receptor phosphorylation mediates displacement of the bound G-protein alpha subunit by arrestin and terminates signaling. The chain is Rhodopsin (RHO) from Rana temporaria (European common frog).